The chain runs to 1193 residues: Non-toxic nonhemagglutinin type A (1193 aa).

Residues 1-408 (MNINDNLSIN…PEEIINLLNG (408 aa)) are light chain nLC. The N-heavy chain nHN stretch occupies residues 409–829 (NNVSLMRSNI…LFSSETALLI (421 aa)). A disulfide bond links cysteine 583 and cysteine 755. A C-heavy chain nHC; required for protection of BoNT/A at pH 2.0 region spans residues 830 to 1193 (KEETWPYELV…SKYLYLWSFK (364 aa)).

The protein belongs to the botulism non-toxic nonhemagglutinin family. Forms a highly interlocked heterodimer with botulinum neurotoxin type A at pH 6.0 but not at pH 7.5, called the minimally functional progenitor toxin complex (M-PTC) (BoNT/A, botA). Post-translationally, the 133-Lys-|-Lys-134 bond is cleaved during long-term storage; the cleavage site is masked in the M-PTC complex.

Assembles with botulinum neurotoxin type A (BoNT/A) and protects it against pH-mediated inactivation or protease activity at pH 2.6 (the pH of the animal gastrointestinal tract) but not at pH 6.0. Necessary for neurotoxicity. The sequence is that of Non-toxic nonhemagglutinin type A from Clostridium botulinum.